Here is a 138-residue protein sequence, read N- to C-terminus: Large ribosomal subunit protein uL16 (138 aa).

A compositionally biased stretch (basic residues) spans 1 to 15; it reads MLSPKKVKYRKKQRG. The interval 1-21 is disordered; that stretch reads MLSPKKVKYRKKQRGRLSGEA.

This sequence belongs to the universal ribosomal protein uL16 family. Part of the 50S ribosomal subunit.

In terms of biological role, binds 23S rRNA and is also seen to make contacts with the A and possibly P site tRNAs. The sequence is that of Large ribosomal subunit protein uL16 from Borreliella afzelii (strain PKo) (Borrelia afzelii).